Consider the following 268-residue polypeptide: Tryptophan synthase alpha chain (268 aa).

Active-site proton acceptor residues include Glu49 and Asp60.

Belongs to the TrpA family. As to quaternary structure, tetramer of two alpha and two beta chains.

The catalysed reaction is (1S,2R)-1-C-(indol-3-yl)glycerol 3-phosphate + L-serine = D-glyceraldehyde 3-phosphate + L-tryptophan + H2O. It functions in the pathway amino-acid biosynthesis; L-tryptophan biosynthesis; L-tryptophan from chorismate: step 5/5. Its function is as follows. The alpha subunit is responsible for the aldol cleavage of indoleglycerol phosphate to indole and glyceraldehyde 3-phosphate. The protein is Tryptophan synthase alpha chain of Salmonella paratyphi A (strain ATCC 9150 / SARB42).